The primary structure comprises 459 residues: Bifunctional protein GlmU (459 aa).

Positions 1–229 (MSNFAIXLAA…FDESLGVNDR (229 aa)) are pyrophosphorylase. UDP-N-acetyl-alpha-D-glucosamine is bound by residues 8–11 (LAAG), Lys-22, Gln-72, and 77–78 (GT). Position 102 (Asp-102) interacts with Mg(2+). UDP-N-acetyl-alpha-D-glucosamine contacts are provided by Gly-139, Glu-154, Asn-169, and Asn-227. Asn-227 serves as a coordination point for Mg(2+). The segment at 230–250 (VALATAESVMRRRINHKHMVN) is linker. An N-acetyltransferase region spans residues 251 to 459 (GVSFVNPEAT…TRLPHHPKNQ (209 aa)). UDP-N-acetyl-alpha-D-glucosamine-binding residues include Arg-332 and Lys-350. His-362 serves as the catalytic Proton acceptor. Tyr-365 and Asn-376 together coordinate UDP-N-acetyl-alpha-D-glucosamine. Residues Ala-379, 385–386 (NY), Ser-404, Ala-422, and Arg-439 each bind acetyl-CoA.

The protein in the N-terminal section; belongs to the N-acetylglucosamine-1-phosphate uridyltransferase family. This sequence in the C-terminal section; belongs to the transferase hexapeptide repeat family. As to quaternary structure, homotrimer. The cofactor is Mg(2+).

It localises to the cytoplasm. It catalyses the reaction alpha-D-glucosamine 1-phosphate + acetyl-CoA = N-acetyl-alpha-D-glucosamine 1-phosphate + CoA + H(+). The enzyme catalyses N-acetyl-alpha-D-glucosamine 1-phosphate + UTP + H(+) = UDP-N-acetyl-alpha-D-glucosamine + diphosphate. It participates in nucleotide-sugar biosynthesis; UDP-N-acetyl-alpha-D-glucosamine biosynthesis; N-acetyl-alpha-D-glucosamine 1-phosphate from alpha-D-glucosamine 6-phosphate (route II): step 2/2. It functions in the pathway nucleotide-sugar biosynthesis; UDP-N-acetyl-alpha-D-glucosamine biosynthesis; UDP-N-acetyl-alpha-D-glucosamine from N-acetyl-alpha-D-glucosamine 1-phosphate: step 1/1. Its pathway is bacterial outer membrane biogenesis; LPS lipid A biosynthesis. Functionally, catalyzes the last two sequential reactions in the de novo biosynthetic pathway for UDP-N-acetylglucosamine (UDP-GlcNAc). The C-terminal domain catalyzes the transfer of acetyl group from acetyl coenzyme A to glucosamine-1-phosphate (GlcN-1-P) to produce N-acetylglucosamine-1-phosphate (GlcNAc-1-P), which is converted into UDP-GlcNAc by the transfer of uridine 5-monophosphate (from uridine 5-triphosphate), a reaction catalyzed by the N-terminal domain. The protein is Bifunctional protein GlmU of Streptococcus pneumoniae serotype 19F (strain G54).